The following is a 97-amino-acid chain: Co-chaperonin GroES (97 aa).

This sequence belongs to the GroES chaperonin family. In terms of assembly, heptamer of 7 subunits arranged in a ring. Interacts with the chaperonin GroEL.

It is found in the cytoplasm. Its function is as follows. Together with the chaperonin GroEL, plays an essential role in assisting protein folding. The GroEL-GroES system forms a nano-cage that allows encapsulation of the non-native substrate proteins and provides a physical environment optimized to promote and accelerate protein folding. GroES binds to the apical surface of the GroEL ring, thereby capping the opening of the GroEL channel. The protein is Co-chaperonin GroES of Blochmanniella floridana.